Reading from the N-terminus, the 294-residue chain is Cyclin-dependent kinase A-1 (294 aa).

Residues 4–287 (YEKEEKIGEG…ARQALEHEYF (284 aa)) enclose the Protein kinase domain. Residues 10-18 (IGEGTYGVV) and Lys33 contribute to the ATP site. Thr14 is subject to Phosphothreonine. Tyr15 is subject to Phosphotyrosine. Catalysis depends on Asp127, which acts as the Proton acceptor. Thr161 is subject to Phosphothreonine; by CAK.

It belongs to the protein kinase superfamily. CMGC Ser/Thr protein kinase family. CDC2/CDKX subfamily. Post-translationally, phosphorylated at Thr-161 by CDKD-1. As to expression, expressed in the dividing region of the root apex and in differentiated cells such as those in the sclerenchyma, pericycle and parenchyma of the central cylinder.

The enzyme catalyses L-seryl-[protein] + ATP = O-phospho-L-seryl-[protein] + ADP + H(+). It catalyses the reaction L-threonyl-[protein] + ATP = O-phospho-L-threonyl-[protein] + ADP + H(+). The catalysed reaction is [DNA-directed RNA polymerase] + ATP = phospho-[DNA-directed RNA polymerase] + ADP + H(+). This chain is Cyclin-dependent kinase A-1 (CDKA-1), found in Oryza sativa subsp. japonica (Rice).